The primary structure comprises 41 residues: Large ribosomal subunit protein bL36 (41 aa).

This sequence belongs to the bacterial ribosomal protein bL36 family.

This Bartonella tribocorum (strain CIP 105476 / IBS 506) protein is Large ribosomal subunit protein bL36.